The sequence spans 139 residues: Cuticle protein 6 (139 aa).

Q1 bears the Pyrrolidone carboxylic acid mark. The region spanning L31–P92 is the Chitin-binding type R&amp;R domain.

This Blaberus craniifer (Death's head cockroach) protein is Cuticle protein 6.